A 354-amino-acid chain; its full sequence is Ornithine transcarbamylase, mitochondrial (354 aa).

The N-terminal 32 residues, 1–32, are a transit peptide targeting the mitochondrion; that stretch reads MLFHLRTLLNNAALRNGHNFVVRNFRCGQPLQ. Lysine 70 is modified (N6-acetyllysine; alternate). Residue lysine 70 is modified to N6-succinyllysine; alternate. An N6-succinyllysine modification is found at lysine 80. Residue lysine 88 is modified to N6-acetyllysine; alternate. Residue lysine 88 is modified to N6-succinyllysine; alternate. Serine 133 carries the post-translational modification Phosphoserine. Lysine 144, lysine 221, lysine 231, and lysine 238 each carry N6-acetyllysine; alternate. Lysine 144, lysine 221, lysine 231, and lysine 238 each carry N6-succinyllysine; alternate. Lysine 243 carries the N6-acetyllysine modification. The active site involves aspartate 263. Lysine 274 and lysine 289 each carry N6-succinyllysine. At lysine 292 the chain carries N6-acetyllysine; alternate. At lysine 292 the chain carries N6-succinyllysine; alternate. Cysteine 303 is a catalytic residue. Residue lysine 307 is modified to N6-acetyllysine; alternate. Residue lysine 307 is modified to N6-succinyllysine; alternate.

The protein belongs to the aspartate/ornithine carbamoyltransferase superfamily. OTCase family. Homotrimer. In terms of processing, acetylation at Lys-88 negatively regulates ornithine carbamoyltransferase activity in response to nutrient signals.

It localises to the mitochondrion matrix. It catalyses the reaction carbamoyl phosphate + L-ornithine = L-citrulline + phosphate + H(+). It participates in nitrogen metabolism; urea cycle; L-citrulline from L-ornithine and carbamoyl phosphate: step 1/1. Its activity is regulated as follows. Negatively regulated by lysine acetylation. Catalyzes the second step of the urea cycle, the condensation of carbamoyl phosphate with L-ornithine to form L-citrulline. The urea cycle ensures the detoxification of ammonia by converting it to urea for excretion. This is Ornithine transcarbamylase, mitochondrial from Bos taurus (Bovine).